Consider the following 307-residue polypeptide: Agmatinase (307 aa).

The Mn(2+) site is built by His-128, Asp-151, His-153, Asp-155, Asp-232, and Asp-234.

This sequence belongs to the arginase family. Agmatinase subfamily. Mn(2+) serves as cofactor.

It catalyses the reaction agmatine + H2O = urea + putrescine. Its pathway is amine and polyamine biosynthesis; putrescine biosynthesis via agmatine pathway; putrescine from agmatine: step 1/1. Functionally, catalyzes the formation of putrescine from agmatine. The chain is Agmatinase from Photorhabdus laumondii subsp. laumondii (strain DSM 15139 / CIP 105565 / TT01) (Photorhabdus luminescens subsp. laumondii).